The following is a 260-amino-acid chain: Phosphate import ATP-binding protein PstB 5 (260 aa).

The ABC transporter domain occupies 9–255 (IKVKDLSFYY…PLDSRTRDYV (247 aa)). Residue 41-48 (GPSGCGKS) participates in ATP binding.

The protein belongs to the ABC transporter superfamily. Phosphate importer (TC 3.A.1.7) family. In terms of assembly, the complex is composed of two ATP-binding proteins (PstB), two transmembrane proteins (PstC and PstA) and a solute-binding protein (PstS).

The protein localises to the cell inner membrane. It catalyses the reaction phosphate(out) + ATP + H2O = ADP + 2 phosphate(in) + H(+). Functionally, part of the ABC transporter complex PstSACB involved in phosphate import. Responsible for energy coupling to the transport system. This chain is Phosphate import ATP-binding protein PstB 5, found in Trichormus variabilis (strain ATCC 29413 / PCC 7937) (Anabaena variabilis).